The chain runs to 225 residues: PKHD-type hydroxylase YbiX (225 aa).

A Fe2OG dioxygenase domain is found at 78–177; sequence TLSTPLFNRY…RVASFMWIQS (100 aa). Fe cation contacts are provided by H96, D98, and H158. R168 serves as a coordination point for 2-oxoglutarate.

The cofactor is Fe(2+). Requires L-ascorbate as cofactor.

The polypeptide is PKHD-type hydroxylase YbiX (Shigella flexneri serotype 5b (strain 8401)).